A 512-amino-acid polypeptide reads, in one-letter code: tRNA-2-methylthio-N(6)-dimethylallyladenosine synthase (512 aa).

Residues 1–20 (MLQQADGVSPDRSSCDTPAP) are disordered. The region spanning 21-137 (RTFEVRTYGC…LPTLLDRARH (117 aa)) is the MTTase N-terminal domain. The [4Fe-4S] cluster site is built by Cys-30, Cys-66, Cys-100, Cys-174, Cys-178, and Cys-181. In terms of domain architecture, Radical SAM core spans 160-397 (RESAYAAWVS…ELQERISWEE (238 aa)). The TRAM domain maps to 399–469 (RAQIGREVEL…PHHLIADAGP (71 aa)). The span at 470-486 (AEHRRTRAGDAHAEGRT) shows a compositional bias: basic and acidic residues. The interval 470-512 (AEHRRTRAGDAHAEGRTPKTGVGLGMPGIGAPEPAPVTQGCAL) is disordered.

It belongs to the methylthiotransferase family. MiaB subfamily. Monomer. It depends on [4Fe-4S] cluster as a cofactor.

The protein localises to the cytoplasm. The enzyme catalyses N(6)-dimethylallyladenosine(37) in tRNA + (sulfur carrier)-SH + AH2 + 2 S-adenosyl-L-methionine = 2-methylsulfanyl-N(6)-dimethylallyladenosine(37) in tRNA + (sulfur carrier)-H + 5'-deoxyadenosine + L-methionine + A + S-adenosyl-L-homocysteine + 2 H(+). In terms of biological role, catalyzes the methylthiolation of N6-(dimethylallyl)adenosine (i(6)A), leading to the formation of 2-methylthio-N6-(dimethylallyl)adenosine (ms(2)i(6)A) at position 37 in tRNAs that read codons beginning with uridine. The polypeptide is tRNA-2-methylthio-N(6)-dimethylallyladenosine synthase (Mycolicibacterium gilvum (strain PYR-GCK) (Mycobacterium gilvum (strain PYR-GCK))).